The chain runs to 164 residues: Lipoprotein signal peptidase (164 aa).

Helical transmembrane passes span W12–Q32, W70–S90, and A102–V122. Residues D123 and D141 contribute to the active site. The helical transmembrane segment at F137–L157 threads the bilayer.

This sequence belongs to the peptidase A8 family.

The protein localises to the cell inner membrane. It catalyses the reaction Release of signal peptides from bacterial membrane prolipoproteins. Hydrolyzes -Xaa-Yaa-Zaa-|-(S,diacylglyceryl)Cys-, in which Xaa is hydrophobic (preferably Leu), and Yaa (Ala or Ser) and Zaa (Gly or Ala) have small, neutral side chains.. It participates in protein modification; lipoprotein biosynthesis (signal peptide cleavage). In terms of biological role, this protein specifically catalyzes the removal of signal peptides from prolipoproteins. In Shigella sonnei (strain Ss046), this protein is Lipoprotein signal peptidase.